A 118-amino-acid chain; its full sequence is Phospholipase A2 'basic' (118 aa).

Disulfide bonds link cysteine 11–cysteine 70, cysteine 26–cysteine 117, cysteine 28–cysteine 44, cysteine 43–cysteine 98, cysteine 50–cysteine 91, cysteine 59–cysteine 84, and cysteine 77–cysteine 89. Positions 27, 29, and 31 each coordinate Ca(2+). The active site involves histidine 47. Residue aspartate 48 coordinates Ca(2+). Residues 52–69 (EKAGKMGCWPYLTLYKYK) carry the Coagulation factor Xa binding motif motif. Residue aspartate 92 is part of the active site.

This sequence belongs to the phospholipase A2 family. Group I subfamily. D49 sub-subfamily. Ca(2+) is required as a cofactor. As to expression, expressed by the venom gland.

The protein resides in the secreted. The enzyme catalyses a 1,2-diacyl-sn-glycero-3-phosphocholine + H2O = a 1-acyl-sn-glycero-3-phosphocholine + a fatty acid + H(+). Snake venom phospholipase A2 (PLA2) that shows strong anticoagulant activity. Binds directly with the coagulation factor FXa (F10) and blocks the formation of the prothombinase complex. Acts by a nonenzymatic mechanism. Also inhibits the complex composed of tissue factor (F3) and coagulation factor VIIa (F7) (TF-VIIa complex) by both enzymatic and nonenzymatic mechanisms. PLA2 catalyzes the calcium-dependent hydrolysis of the 2-acyl groups in 3-sn-phosphoglycerides. The chain is Phospholipase A2 'basic' from Naja nigricollis (Black-necked spitting cobra).